The chain runs to 148 residues: uncharacterized protein (148 aa).

One can recognise an HTH asnC-type domain in the interval 4 to 65 (LDRVDMQLVK…IPDIDKLGYM (62 aa)). The H-T-H motif DNA-binding region spans 23–42 (YRELADILNTTRQRIARRID).

This is an uncharacterized protein from Pyrococcus horikoshii (strain ATCC 700860 / DSM 12428 / JCM 9974 / NBRC 100139 / OT-3).